A 469-amino-acid polypeptide reads, in one-letter code: tRNA-2-methylthio-N(6)-dimethylallyladenosine synthase (469 aa).

Residues 27 to 142 enclose the MTTase N-terminal domain; that stretch reads KKVYIRTFGC…LPQMLAQRAR (116 aa). Positions 36, 73, 105, 179, 183, and 186 each coordinate [4Fe-4S] cluster. Residues 165–398 form the Radical SAM core domain; that stretch reads KVDGAAAFVS…QATIEDNVRR (234 aa). Residues 401–467 form the TRAM domain; it reads ERRVGTVQRV…PHSLRGEPVL (67 aa).

Belongs to the methylthiotransferase family. MiaB subfamily. In terms of assembly, monomer. [4Fe-4S] cluster is required as a cofactor.

It is found in the cytoplasm. It catalyses the reaction N(6)-dimethylallyladenosine(37) in tRNA + (sulfur carrier)-SH + AH2 + 2 S-adenosyl-L-methionine = 2-methylsulfanyl-N(6)-dimethylallyladenosine(37) in tRNA + (sulfur carrier)-H + 5'-deoxyadenosine + L-methionine + A + S-adenosyl-L-homocysteine + 2 H(+). Functionally, catalyzes the methylthiolation of N6-(dimethylallyl)adenosine (i(6)A), leading to the formation of 2-methylthio-N6-(dimethylallyl)adenosine (ms(2)i(6)A) at position 37 in tRNAs that read codons beginning with uridine. The chain is tRNA-2-methylthio-N(6)-dimethylallyladenosine synthase from Leptothrix cholodnii (strain ATCC 51168 / LMG 8142 / SP-6) (Leptothrix discophora (strain SP-6)).